Reading from the N-terminus, the 416-residue chain is Putative nucleoside permease NupX (416 aa).

The Periplasmic segment spans residues 1-2 (MD). Residues 3–23 (VMRSVLGMVVLLTIAFLLSVN) form a helical membrane-spanning segment. The Cytoplasmic portion of the chain corresponds to 24 to 31 (KKKISLRT). The chain crosses the membrane as a helical span at residues 32 to 52 (VGAALVLQVVIGGIMLWLPPG). Residues 53–95 (RWVAEKVAFGVHKVMAYSDAGSAFIFGSLVGPKMDTLFDGAGF) are Periplasmic-facing. The chain crosses the membrane as a helical span at residues 96–118 (IFGFRVLPAIIFVTALVSILYYI). Over 119-172 (GVMGILIRILGGIFQKALNISKIESFVAVTTIFLGQNEIPAIVKPFIDRLNRNE) the chain is Cytoplasmic. A helical membrane pass occupies residues 173 to 193 (LFTAICSGMASIAGSTMIGYA). Topologically, residues 194 to 196 (ALG) are periplasmic. A helical transmembrane segment spans residues 197–217 (VPVEYLLAASLMAIPGGILFA). Residues 218–246 (RLLSPATESSQVSFNNLSFTETPPKSIIE) lie on the Cytoplasmic side of the membrane. A helical transmembrane segment spans residues 247–267 (AAATGAMTGLKIAAGVATVVM). The Periplasmic segment spans residues 268-352 (AFVAIIALIN…QTAGTLDAKT (85 aa)). Residues 353-373 (VAIISFALCGFANFGSIGVVV) traverse the membrane as a helical segment. Over 374 to 394 (GAFSAVAPHRAPEIAQLGLRA) the chain is Cytoplasmic. The helical transmembrane segment at 395–415 (LAAATLSNLMSATIAGFFIGL) threads the bilayer. Residue Ala416 is a topological domain, periplasmic.

It belongs to the concentrative nucleoside transporter (CNT) (TC 2.A.41) family.

Its subcellular location is the cell inner membrane. The chain is Putative nucleoside permease NupX (nupX) from Escherichia coli (strain K12).